Here is a 634-residue protein sequence, read N- to C-terminus: MTELDYSKLGLKVGLEIHQQLNTNKKLFCDCSTTLDEKHHGTLQRYLRPSFSEIGEIDTAALFEWQKGKKYLYQIPFNSCLVEADEEPPHGLNREALAVVLAVAMSLESNIVDEIYVMRKIVIDGSDTTGFQRTSIVAMGGQVIVEGKKIGIQTIALEEDAARKISESANETMYSLDRLGIPLIEISTAPDITTPEEAEKVAFRIGQLLRLTGKVKRGIGTIRQDLNVSIQGGVKTEIKGVQRLELIPEIIKNEARRQYELLKIKDELVNKRGLSKTIVENEIKELELTHLFRNTNSKIIKKELEKGGLIYGIKFKGFKGIFGRELMPNRRFGTEIADYVRALAELGGIFHSDELPNYGITSEEVESVKKELGIGENDGFVLVIGDKEKLKVAITKIKERVLYAFVGVPKETRVALDDGTTKFMRPQPGSARMYPETDIIPIKIDESILNFAKSFVPENPETKLRKLIEMGLSKELATEILNSPRLDLFEELSKKYSPKVSPIVIATTLENYIKYAKSKGGDISVITDEVIEEIINALYNDKISKDSIQEILVDYSTSKKPIRNIVDNYAKITDEELNRIIDKILDENKDIINQKGEKAFNVIIGKVMNVVKGRAEGKKVVDTLKLKMKNYPRT.

This sequence belongs to the GatB/GatE family. GatE subfamily. Heterodimer of GatD and GatE.

The catalysed reaction is L-glutamyl-tRNA(Gln) + L-glutamine + ATP + H2O = L-glutaminyl-tRNA(Gln) + L-glutamate + ADP + phosphate + H(+). Allows the formation of correctly charged Gln-tRNA(Gln) through the transamidation of misacylated Glu-tRNA(Gln) in organisms which lack glutaminyl-tRNA synthetase. The reaction takes place in the presence of glutamine and ATP through an activated gamma-phospho-Glu-tRNA(Gln). The GatDE system is specific for glutamate and does not act on aspartate. This chain is Glutamyl-tRNA(Gln) amidotransferase subunit E, found in Sulfolobus acidocaldarius (strain ATCC 33909 / DSM 639 / JCM 8929 / NBRC 15157 / NCIMB 11770).